The primary structure comprises 508 residues: MRVSLSLTSRCRINFIRERILENSSNSTTETQVKRALKSRHVSMIALGGTIGTGLFLTSGDVIHTAGPFGALTAYVLIGAMVYFLMTSLGEMATYLPTSGSFSDYGTRYVDPAFGFALGWNYWLNWAITVAVDLTAVALCIKFWLPDVPSWIFSLIALIIVFSINALSVKTFGETEYWLSAIKITVVVLFLIIGFLSIFGIMGGHIDVAKNLSVGNHGFVGGLGSFTTGGGILGVLLVAGFSFQGTELLGITAGEAENPEKSIPKAMNSIFWRILVFYILSIFVMAAIIPFTDPHLVGGNSAAQSPFTIVFERVGFSIAASIMNAVVLTSVVSAANSGMYASTRMLYSLAKDGGAPKIFSKTSKNGIPFIALLATTAVALLTFLTSIYGVSFFTLLVSASGLTGFIAWIGIAISHFRFRRAYVAQGKDVKKLPYHAKLFPFGPILALIMTVLVTLGQDPMLLFGKTWVQGVVMYAAIPLFFILYLGYKFKNKTKLIPLKDVDLSRHKD.

A run of 12 helical transmembrane segments spans residues 43 to 63, 66 to 86, 112 to 132, 144 to 164, 184 to 204, 219 to 239, 270 to 290, 314 to 334, 367 to 387, 393 to 413, 436 to 456, and 467 to 487; these read SMIA…GDVI, AGPF…YFLM, PAFG…TVAV, WLPD…VFSI, ITVV…IMGG, FVGG…LLVA, IFWR…AIIP, VGFS…VVSA, IPFI…LTSI, FTLL…GIAI, AKLF…VTLG, and WVQG…YLGY.

This sequence belongs to the amino acid-polyamine-organocation (APC) superfamily. Amino acid transporter (AAT) (TC 2.A.3.1) family.

The protein resides in the cell membrane. It catalyses the reaction L-lysine(out) + H(+)(out) = L-lysine(in) + H(+)(in). Functionally, permease involved in lysine uptake. This is Lysine-specific permease LysP from Lactococcus lactis subsp. cremoris (strain MG1363).